A 606-amino-acid chain; its full sequence is Arginine--tRNA ligase (606 aa).

Residues 126–136 carry the 'HIGH' region motif; sequence PNTNKPLHLGH.

Belongs to the class-I aminoacyl-tRNA synthetase family. Monomer.

Its subcellular location is the cytoplasm. The enzyme catalyses tRNA(Arg) + L-arginine + ATP = L-arginyl-tRNA(Arg) + AMP + diphosphate. The protein is Arginine--tRNA ligase of Phocaeicola vulgatus (strain ATCC 8482 / DSM 1447 / JCM 5826 / CCUG 4940 / NBRC 14291 / NCTC 11154) (Bacteroides vulgatus).